A 204-amino-acid polypeptide reads, in one-letter code: VQ motif-containing protein 13 (204 aa).

Residues 1-12 (MEKSPRYRDKAK) are compositionally biased toward basic and acidic residues. Residues 1 to 26 (MEKSPRYRDKAKNLLPSPSSCTTTPT) form a disordered region. Over residues 16–26 (PSPSSCTTTPT) the composition is skewed to low complexity. Serine 17 bears the Phosphoserine mark. The VQ motif lies at 46 to 55 (FKQVVQLLTG). The segment at 56–90 (IPKNPTHQPDPRFPPFHSIPPIKAVTNKKQSSSFR) is disordered. Serine 73 and serine 128 each carry phosphoserine. Phosphothreonine is present on threonine 131. The segment at 133–204 (LMSDPFYRPG…HSPAPSPHDH (72 aa)) is disordered. Residues 143-152 (SFSQSPSDSK) are compositionally biased toward low complexity. Phosphoserine is present on residues serine 147 and serine 173. Threonine 177 and threonine 192 each carry phosphothreonine. Residues serine 196 and serine 200 each carry the phosphoserine modification.

In terms of processing, phosphorylated on serine and threonine residues by MPK6.

It is found in the nucleus. Its function is as follows. May modulate WRKY transcription factor activities. In Arabidopsis thaliana (Mouse-ear cress), this protein is VQ motif-containing protein 13.